Reading from the N-terminus, the 502-residue chain is Cytochrome P450 monooxygenase prhN (502 aa).

Residues 14–30 (SGALLIVGILLLRWALW) form a helical membrane-spanning segment. An N-linked (GlcNAc...) asparagine glycan is attached at N165. C443 lines the heme pocket. The N-linked (GlcNAc...) asparagine glycan is linked to N474.

This sequence belongs to the cytochrome P450 family. It depends on heme as a cofactor.

The protein resides in the membrane. It functions in the pathway secondary metabolite biosynthesis; terpenoid biosynthesis. Its function is as follows. Cytochrome P450 monooxygenase; part of the gene cluster that mediates the biosynthesis of paraherquonin, a meroterpenoid with a unique, highly congested hexacyclic molecular architecture. The first step of the pathway is the synthesis of 3,5-dimethylorsellinic acid (DMOA) by the polyketide synthase prhL. Synthesis of DMOA is followed by farnesylation by the prenyltransferase prhE, methylesterification by the methyl-transferase prhM, epoxidation of the prenyl chain by the flavin-dependent monooxygenase prhF, and cyclization of the farnesyl moiety by the terpene cyclase prhH, to yield the tetracyclic intermediate, protoaustinoid A. The short chain dehydrogenase prhI then oxidizes the C-3 alcohol group of the terpene cyclase product to transform protoaustinoid A into protoaustinoid B. The FAD-binding monooxygenase prhJ catalyzes the oxidation of protoaustinoid B into preaustinoid A which is further oxidized into preaustinoid A1 by FAD-binding monooxygenase phrK. Finally, prhA leads to berkeleydione via the berkeleyone B intermediate. PrhA is a multifunctional dioxygenase that first desaturates at C5-C6 to form berkeleyone B, followed by rearrangement of the A/B-ring to form the cycloheptadiene moiety in berkeleydione. Berkeleydione serves as the key intermediate for the biosynthesis of paraherquonin as well as many other meroterpenoids. The cytochrome P450 monooxygenases prhB, prhD, and prhN, as well as the isomerase prhC, are probably involved in the late stage of paraherquonin biosynthesis, after the production of berkeleydione. Especially prhC might be a multifunctional enzyme that catalyzes the D-ring expansion via intramolecular methoxy rearrangement, as well as the hydrolysis of the expanded D-ring. The protein is Cytochrome P450 monooxygenase prhN of Penicillium brasilianum.